The sequence spans 176 residues: Shikimate kinase (176 aa).

Gly-12–Thr-17 serves as a coordination point for ATP. Residue Ser-16 coordinates Mg(2+). Asp-34, Arg-58, and Gly-80 together coordinate substrate. Residue Arg-117 coordinates ATP. Arg-136 is a substrate binding site. Residue Arg-153 participates in ATP binding.

Belongs to the shikimate kinase family. In terms of assembly, monomer. Mg(2+) is required as a cofactor.

It localises to the cytoplasm. The catalysed reaction is shikimate + ATP = 3-phosphoshikimate + ADP + H(+). It participates in metabolic intermediate biosynthesis; chorismate biosynthesis; chorismate from D-erythrose 4-phosphate and phosphoenolpyruvate: step 5/7. Functionally, catalyzes the specific phosphorylation of the 3-hydroxyl group of shikimic acid using ATP as a cosubstrate. This chain is Shikimate kinase, found in Mycobacterium bovis (strain ATCC BAA-935 / AF2122/97).